The primary structure comprises 156 residues: Ribosome maturation factor RimP (156 aa).

Belongs to the RimP family.

It localises to the cytoplasm. Required for maturation of 30S ribosomal subunits. The chain is Ribosome maturation factor RimP from Bacillus subtilis (strain 168).